Consider the following 130-residue polypeptide: S-adenosylmethionine decarboxylase proenzyme (130 aa).

The Schiff-base intermediate with substrate; via pyruvic acid role is filled by serine 63. Serine 63 is modified (pyruvic acid (Ser); by autocatalysis). Histidine 68 (proton acceptor; for processing activity) is an active-site residue. The active-site Proton donor; for catalytic activity is cysteine 83.

Belongs to the prokaryotic AdoMetDC family. Type 1 subfamily. In terms of assembly, heterotetramer of two alpha and two beta chains arranged as a dimer of alpha/beta heterodimers. Pyruvate is required as a cofactor. Post-translationally, is synthesized initially as an inactive proenzyme. Formation of the active enzyme involves a self-maturation process in which the active site pyruvoyl group is generated from an internal serine residue via an autocatalytic post-translational modification. Two non-identical subunits are generated from the proenzyme in this reaction, and the pyruvate is formed at the N-terminus of the alpha chain, which is derived from the carboxyl end of the proenzyme. The post-translation cleavage follows an unusual pathway, termed non-hydrolytic serinolysis, in which the side chain hydroxyl group of the serine supplies its oxygen atom to form the C-terminus of the beta chain, while the remainder of the serine residue undergoes an oxidative deamination to produce ammonia and the pyruvoyl group blocking the N-terminus of the alpha chain.

It catalyses the reaction S-adenosyl-L-methionine + H(+) = S-adenosyl 3-(methylsulfanyl)propylamine + CO2. It functions in the pathway amine and polyamine biosynthesis; S-adenosylmethioninamine biosynthesis; S-adenosylmethioninamine from S-adenosyl-L-methionine: step 1/1. Its function is as follows. Catalyzes the decarboxylation of S-adenosylmethionine to S-adenosylmethioninamine (dcAdoMet), the propylamine donor required for the synthesis of the polyamines spermine and spermidine from the diamine putrescine. The chain is S-adenosylmethionine decarboxylase proenzyme from Thermosipho melanesiensis (strain DSM 12029 / CIP 104789 / BI429).